A 118-amino-acid polypeptide reads, in one-letter code: MARIAGINIPDHKHAVIALTAIYGIGKTRSQAILAEVGIAEDVKISELNDEQIDILRDGVAKYTVEGDLRREVSMNIKRLMDLGCYRGLRHRRSLPLRGQRTKTNARTRKGPRKPIKK.

Residues 94–118 (SLPLRGQRTKTNARTRKGPRKPIKK) are disordered.

This sequence belongs to the universal ribosomal protein uS13 family. In terms of assembly, part of the 30S ribosomal subunit. Forms a loose heterodimer with protein S19. Forms two bridges to the 50S subunit in the 70S ribosome.

In terms of biological role, located at the top of the head of the 30S subunit, it contacts several helices of the 16S rRNA. In the 70S ribosome it contacts the 23S rRNA (bridge B1a) and protein L5 of the 50S subunit (bridge B1b), connecting the 2 subunits; these bridges are implicated in subunit movement. Contacts the tRNAs in the A and P-sites. In Aliivibrio fischeri (strain ATCC 700601 / ES114) (Vibrio fischeri), this protein is Small ribosomal subunit protein uS13.